A 1375-amino-acid polypeptide reads, in one-letter code: Mediator of RNA polymerase II transcription subunit 13 (1375 aa).

The segment at 1–51 (MKASEMARPPMRPGNPHAFASPATTPSRTASPNNAQGANVRTTQGGNQAGA) is disordered. Over residues 22–51 (PATTPSRTASPNNAQGANVRTTQGGNQAGA) the composition is skewed to polar residues. Coiled coils occupy residues 182-216 (ADDS…WLSR) and 297-324 (QLER…KDEA). The span at 313-324 (AEEDAMRRKDEA) shows a compositional bias: basic and acidic residues. Disordered regions lie at residues 313–333 (AEED…SSPF), 350–370 (YPTP…DTPS), 397–417 (YTTT…APLE), 537–581 (ATSP…PASL), 660–689 (RAVS…VDTH), 841–862 (QAKG…IPSN), and 1233–1285 (TPTT…AADP). A compositionally biased stretch (polar residues) spans 397 to 411 (YTTTDNQQHASTSPT). Residues 666-685 (SASDSESETSDMSEGSPEDP) are compositionally biased toward acidic residues. Polar residues predominate over residues 1233–1259 (TPTTPAPSNSSAQANTNTPGSTPQTGV).

This sequence belongs to the Mediator complex subunit 13 family. In terms of assembly, component of the SRB8-11 complex, which itself associates with the Mediator complex.

It is found in the nucleus. In terms of biological role, component of the SRB8-11 complex. The SRB8-11 complex is a regulatory module of the Mediator complex which is itself involved in regulation of basal and activated RNA polymerase II-dependent transcription. The SRB8-11 complex may be involved in the transcriptional repression of a subset of genes regulated by Mediator. It may inhibit the association of the Mediator complex with RNA polymerase II to form the holoenzyme complex. In Phaeosphaeria nodorum (strain SN15 / ATCC MYA-4574 / FGSC 10173) (Glume blotch fungus), this protein is Mediator of RNA polymerase II transcription subunit 13 (SSN2).